Here is an 800-residue protein sequence, read N- to C-terminus: Phenylalanine--tRNA ligase beta subunit (800 aa).

The region spanning 39–154 is the tRNA-binding domain; it reads TKDIKKLVVG…EAVKPGTDAL (116 aa). A B5 domain is found at 408-483; that stretch reads SFVTPIKITA…RIYGYDDIPS (76 aa). The Mg(2+) site is built by Asp461, Asp467, Glu470, and Glu471. The region spanning 708–800 is the FDX-ACB domain; the sequence is PRFPGVTRDI…ALKKHGAIIR (93 aa).

This sequence belongs to the phenylalanyl-tRNA synthetase beta subunit family. Type 1 subfamily. As to quaternary structure, tetramer of two alpha and two beta subunits. It depends on Mg(2+) as a cofactor.

It localises to the cytoplasm. It catalyses the reaction tRNA(Phe) + L-phenylalanine + ATP = L-phenylalanyl-tRNA(Phe) + AMP + diphosphate + H(+). The protein is Phenylalanine--tRNA ligase beta subunit of Staphylococcus epidermidis (strain ATCC 35984 / DSM 28319 / BCRC 17069 / CCUG 31568 / BM 3577 / RP62A).